A 339-amino-acid chain; its full sequence is D-erythrose-4-phosphate dehydrogenase (339 aa).

NAD(+) is bound at residue 12–13 (RI). Substrate-binding positions include 154-156 (SCT), Arg200, 213-214 (TK), and Arg236. The active-site Nucleophile is Cys155. Asn318 lines the NAD(+) pocket.

The protein belongs to the glyceraldehyde-3-phosphate dehydrogenase family. Epd subfamily. In terms of assembly, homotetramer.

Its subcellular location is the cytoplasm. It catalyses the reaction D-erythrose 4-phosphate + NAD(+) + H2O = 4-phospho-D-erythronate + NADH + 2 H(+). Its pathway is cofactor biosynthesis; pyridoxine 5'-phosphate biosynthesis; pyridoxine 5'-phosphate from D-erythrose 4-phosphate: step 1/5. Catalyzes the NAD-dependent conversion of D-erythrose 4-phosphate to 4-phosphoerythronate. This Enterobacter sp. (strain 638) protein is D-erythrose-4-phosphate dehydrogenase.